The primary structure comprises 244 residues: Exosome complex component Rrp41 (244 aa).

Belongs to the RNase PH family. Rrp41 subfamily. Component of the archaeal exosome complex. Forms a hexameric ring-like arrangement composed of 3 Rrp41-Rrp42 heterodimers. The hexameric ring associates with a trimer of Rrp4 and/or Csl4 subunits.

It is found in the cytoplasm. In terms of biological role, catalytic component of the exosome, which is a complex involved in RNA degradation. Has 3'-&gt;5' exoribonuclease activity. Can also synthesize heteromeric RNA-tails. This Nitrosopumilus maritimus (strain SCM1) protein is Exosome complex component Rrp41.